A 1052-amino-acid polypeptide reads, in one-letter code: RTX-III toxin determinant A from serotype 8 (1052 aa).

The next 3 helical transmembrane spans lie at 248 to 265, 275 to 334, and 372 to 418; these read GLDI…SFAL, KVAA…LRVA, and DASI…GILE. 6 Hemolysin-type calcium-binding repeats span residues 744–761, 762–779, 780–797, 798–815, 826–843, and 844–861; these read KGSK…DDLL, NGND…NDEL, RGDN…NDKL, LGGN…NDEL, RGGK…SDLL, and DGGE…SDFY.

It belongs to the RTX prokaryotic toxin (TC 1.C.11) family. Palmitoylated by ApxIIIC. The toxin only becomes active when modified.

Its subcellular location is the secreted. The protein localises to the host cell membrane. Functionally, does not have hemolytic activity but shows a strong cytotoxicity towards alveolar macrophages and neutrophils. In Actinobacillus pleuropneumoniae (Haemophilus pleuropneumoniae), this protein is RTX-III toxin determinant A from serotype 8 (apxIIIA).